The following is a 188-amino-acid chain: Pro-adrenomedullin (188 aa).

An N-terminal signal peptide occupies residues 1–21 (MKLVPVALMYLGSLAFLGADT). The residue at position 41 (arginine 41) is an Arginine amide. Residues 45-92 (ELRLSSSYPTGIADLKAGPAQTVIRPQDVKGSSRSPQASIPDAARIRV) constitute a propeptide that is removed on maturation. An intrachain disulfide couples cysteine 110 to cysteine 115. Positions 131-177 (DKDGVAPRSKISPQGYGRRRRRSLPEASLGRTLRSQEPQAHGAPASP) are disordered. At tyrosine 146 the chain carries Tyrosine amide. Positions 153 to 188 (SLPEASLGRTLRSQEPQAHGAPASPAHQVLATLFRI) are cleaved as a propeptide — preproAM C-terminal fragment.

Belongs to the adrenomedullin family. As to expression, highly expressed in adrenal glands, lung and kidney.

The protein resides in the secreted. Its function is as follows. Adrenomedullin/ADM and proadrenomedullin N-20 terminal peptide/PAMP are peptide hormones that act as potent hypotensive and vasodilatator agents. Numerous actions have been reported most related to the physiologic control of fluid and electrolyte homeostasis. Functionally, ADM function is mediated by the CALCRL-RAMP2 and CALCRL-RAMP3 receptor complexes with ADM showing the highest potency for the CALCRL-RAMP2 complex. The chain is Pro-adrenomedullin (ADM) from Sus scrofa (Pig).